A 479-amino-acid chain; its full sequence is Caspase-8 (479 aa).

A propeptide spanning residues 1 to 216 (MDFSRNLYDI…TISDSPREQD (216 aa)) is cleaved from the precursor. DED domains lie at 2 to 80 (DFSR…TYLN) and 100 to 177 (AYRV…IIND). Residues S188 and S211 each carry the phosphoserine modification. The residue at position 224 (K224) is an N6-acetyllysine. H317 is a catalytic residue. Residue Y334 is modified to Phosphotyrosine. The active site involves C360. The propeptide occupies 375-384 (SEEQPYLEMD). Residue Y380 is modified to Phosphotyrosine; by SRC. Residue S387 is modified to Phosphoserine; by CDK1. The residue at position 413 (R413) is a (Microbial infection) ADP-riboxanated arginine.

Belongs to the peptidase C14A family. As to quaternary structure, heterotetramer that consists of two anti-parallel arranged heterodimers, each one formed by a 18 kDa (p18) and a 10 kDa (p10) subunit. Component of the death-induced signaling complex (DISC) composed of cell surface receptor FAS/CD95 or TNFRSF1A, adapter protein FADD and the CASP8 protease; recruitment of CASP8 to the complex is required for processing of CASP8 into the p18 and p10 subunits. Component of the AIM2 PANoptosome complex, a multiprotein complex that drives inflammatory cell death (PANoptosis). Interacts with CFLAR and PEA15. Interacts with TNFAIP8L2. Interacts with CASP8AP2. Interacts with RFFL and RNF34; negatively regulate CASP8 through proteasomal degradation. Interacts with NOL3; decreases CASP8 activity in a mitochondria localization- and phosphorylation-dependent manner and this interaction is dissociated by calcium. Interacts with UBR2ca. Interacts with RIPK1. Interacts with stimulated TNFRSF10B; this interaction is followed by CASP8 proteolytic cleavage and activation. Interacts (phosphorylated on Tyr-380) with PIK3R1. Interacts at the endoplasmic reticulum with a complex containing BCAP31, BAP29, BCL2 and/or BCL2L1. In terms of assembly, (Microbial infection) Interacts with human cytomegalovirus/HHV-5 protein vICA/UL36; this interaction inhibits CASP8 activation. As to quaternary structure, (Microbial infection) Interacts with NleF from pathogenic E.coli. (Microbial infection) Interacts with molluscum contagiosum virus protein MC160. In terms of assembly, (Microbial infection) Interacts (via RIP homotypic interaction motif) with herpes simplex virus 1/HHV-1 protein RIR1/ICP6 (via RIP homotypic interaction motif); this interaction prevents necroptosis activation. As to quaternary structure, (Microbial infection) Interacts (via RIP homotypic interaction motif) with herpes simplex virus 2/HHV-2 protein RIR1/ICP10 (via RIP homotypic interaction motif); this interaction prevents necroptosis activation. Post-translationally, generation of the p10 and p18 subunits requires association with the death-inducing signaling complex (DISC), whereas additional processing is likely due to the autocatalytic activity of the activated protease. GZMB and CASP10 can be involved in these processing events. Phosphorylation on Ser-387 during mitosis by CDK1 inhibits activation by proteolysis and prevents apoptosis. Phosphorylation on Tyr-380 by SRC is mediated by interaction with the SRC SH2 domain and does not affect dimerization or recruitment to the death-inducing signaling complex (DISC) but negatively regulates DISC-mediated processing and activation of CASP8, down-regulating its proapoptotic function. Phosphorylation on Tyr-380 also enhances localization to lamellipodia in migrating cells. In terms of processing, (Microbial infection) ADP-riboxanation by C.violaceum CopC blocks CASP8 processing, preventing CASP8 activation and ability to mediate extrinsic apoptosis. Post-translationally, (Microbial infection) Proteolytically cleaved by the cowpox virus CRMA death inhibitory protein. Isoform 1, isoform 5 and isoform 7 are expressed in a wide variety of tissues. Highest expression in peripheral blood leukocytes, spleen, thymus and liver. Barely detectable in brain, testis and skeletal muscle.

The protein localises to the cytoplasm. It is found in the nucleus. It localises to the cell projection. The protein resides in the lamellipodium. The enzyme catalyses Strict requirement for Asp at position P1 and has a preferred cleavage sequence of (Leu/Asp/Val)-Glu-Thr-Asp-|-(Gly/Ser/Ala).. With respect to regulation, CASP8 activity is restricted by RIPK1. Inhibited by the effector protein NleF that is produced by pathogenic E.coli; this inhibits apoptosis. Functionally, thiol protease that plays a key role in programmed cell death by acting as a molecular switch for apoptosis, necroptosis and pyroptosis, and is required to prevent tissue damage during embryonic development and adulthood. Initiator protease that induces extrinsic apoptosis by mediating cleavage and activation of effector caspases responsible for FAS/CD95-mediated and TNFRSF1A-induced cell death. Cleaves and activates effector caspases CASP3, CASP4, CASP6, CASP7, CASP9 and CASP10. Binding to the adapter molecule FADD recruits it to either receptor FAS/TNFRSF6 or TNFRSF1A. The resulting aggregate called the death-inducing signaling complex (DISC) performs CASP8 proteolytic activation. The active dimeric enzyme is then liberated from the DISC and free to activate downstream apoptotic proteases. Proteolytic fragments of the N-terminal propeptide (termed CAP3, CAP5 and CAP6) are likely retained in the DISC. In addition to extrinsic apoptosis, also acts as a negative regulator of necroptosis: acts by cleaving RIPK1 at 'Asp-324', which is crucial to inhibit RIPK1 kinase activity, limiting TNF-induced apoptosis, necroptosis and inflammatory response. Also able to initiate pyroptosis by mediating cleavage and activation of gasdermin-C and -D (GSDMC and GSDMD, respectively): gasdermin cleavage promotes release of the N-terminal moiety that binds to membranes and forms pores, triggering pyroptosis. Initiates pyroptosis following inactivation of MAP3K7/TAK1. Also acts as a regulator of innate immunity by mediating cleavage and inactivation of N4BP1 downstream of TLR3 or TLR4, thereby promoting cytokine production. May participate in the Granzyme B (GZMB) cell death pathways. Cleaves PARP1 and PARP2. Independent of its protease activity, promotes cell migration following phosphorylation at Tyr-380. Its function is as follows. Lacks the catalytic site and may interfere with the pro-apoptotic activity of the complex. In terms of biological role, lacks the catalytic site and may interfere with the pro-apoptotic activity of the complex. Acts as an inhibitor of the caspase cascade. This is Caspase-8 from Homo sapiens (Human).